Consider the following 328-residue polypeptide: Stress response kinase A (328 aa).

The active-site Proton acceptor is Asp201. Mg(2+)-binding residues include Asn206 and Asp217. Residue Asp217 is part of the active site.

Belongs to the SrkA/RdoA protein kinase family. Monomer. Mg(2+) is required as a cofactor.

It is found in the cytoplasm. It catalyses the reaction L-seryl-[protein] + ATP = O-phospho-L-seryl-[protein] + ADP + H(+). The enzyme catalyses L-threonyl-[protein] + ATP = O-phospho-L-threonyl-[protein] + ADP + H(+). Its function is as follows. A protein kinase that phosphorylates Ser and Thr residues. Probably acts to suppress the effects of stress linked to accumulation of reactive oxygen species. Probably involved in the extracytoplasmic stress response. The polypeptide is Stress response kinase A (Salmonella paratyphi A (strain ATCC 9150 / SARB42)).